The chain runs to 655 residues: p-hydroxybenzoic acid efflux pump subunit AaeB (655 aa).

The next 11 membrane-spanning stretches (helical) occupy residues 13 to 33 (FAVKLATAIVLALFVGFHFQL), 38 to 58 (WAVLTAAIVAAGPAFAAGGEP), 69 to 89 (LRIIGTFIGCIAGLVIIIAMI), 93 to 113 (LLMILVCCIWAGFCTWISSLV), 121 to 141 (WGLAGYTALIIVITIQPEPLL), 152 to 172 (EIVIGIVCAIMADLLFSPRSI), 370 to 390 (LFWLWTGWTSGSGAMVMIAVV), 407 to 427 (FIYGTLAALPLGLLYFLVIIP), 431 to 451 (QSMLLLCISLAVLGFFLGIEV), 459 to 479 (MGALASTINIIVLDNPMTFHF), and 482 to 502 (FLDSALGQIVGCVLAFTVILL).

It belongs to the aromatic acid exporter ArAE (TC 2.A.85) family.

The protein localises to the cell inner membrane. Its function is as follows. Forms an efflux pump with AaeA. Could function as a metabolic relief valve, allowing to eliminate certain compounds when they accumulate to high levels in the cell. The sequence is that of p-hydroxybenzoic acid efflux pump subunit AaeB from Escherichia coli O6:K15:H31 (strain 536 / UPEC).